The sequence spans 321 residues: MEEGQYSEIEELPRRRCCRRGTQIVLLGLVTAALWAGLLTLLLLWHWDTTQSLKQLEERAARNVSQVSKNLESHHGDQMAQKSQSTQISQELEELRAEQQRLKSQDLELSWNLNGLQADLSSFKSQELNERNEASDLLERLREEVTKLRMELQVSSGFVCNTCPEKWINFQRKCYYFGKGTKQWVHARYACDDMEGQLVSIHSPEEQDFLTKHASHTGSWIGLRNLDLKGEFIWVDGSHVDYSNWAPGEPTSRSQGEDCVMMRGSGRWNDAFCDRKLGAWVCDRLATCTPPASEGSAESMGPDSRPDPDGRLPTPSAPLHS.

Residues 1 to 21 (MEEGQYSEIEELPRRRCCRRG) are Cytoplasmic-facing. Residues Cys-17 and Cys-18 are each lipidated (S-palmitoyl cysteine). The helical; Signal-anchor for type II membrane protein transmembrane segment at 22 to 47 (TQIVLLGLVTAALWAGLLTLLLLWHW) threads the bilayer. Residues 48 to 321 (DTTQSLKQLE…LPTPSAPLHS (274 aa)) are Extracellular-facing. Residue Asn-63 is glycosylated (N-linked (GlcNAc...) asparagine). Residues 66–85 (QVSKNLESHHGDQMAQKSQS) are disordered. 3 consecutive repeats follow at residues 69–89 (KNLE…TQIS), 90–110 (QELE…LELS), and 111–131 (WNLN…LNER). Cystine bridges form between Cys-160–Cys-288, Cys-163–Cys-174, Cys-191–Cys-282, and Cys-259–Cys-273. Residues 162–284 (TCPEKWINFQ…RKLGAWVCDR (123 aa)) form the C-type lectin domain. Glu-249, Thr-251, Asn-269, and Asp-270 together coordinate Ca(2+). Residues 290–321 (PPASEGSAESMGPDSRPDPDGRLPTPSAPLHS) form a disordered region. O-linked (Xyl...) (chondroitin sulfate) serine glycosylation occurs at Ser-296.

Homotrimer. Interacts (via C-type lectin domain) with IGHE (via CH3 region); this interaction regulates IgE homeostasis. Interacts (via the C-terminus) with CR2/CD21 (via Sushi domain 1 and 2). Post-translationally, N- and O-glycosylated. The secreted form sCD23 is produced by ADAM10-mediated ectodomain shedding. In terms of tissue distribution, detected in urine (at protein level).

Its subcellular location is the cell membrane. The protein localises to the secreted. Functionally, low-affinity receptor for immunoglobulin E (IgE) and CR2/CD21. Has essential roles in the regulation of IgE production and in the differentiation of B cells. On B cells, initiates IgE-dependent antigen uptake and presentation to T cells. On macrophages, upon IgE binding and antigen cross-linking induces intracellular killing of parasites through activation of L-Arginine-nitric oxide pathway. The protein is Low affinity immunoglobulin epsilon Fc receptor (FCER2) of Homo sapiens (Human).